A 208-amino-acid polypeptide reads, in one-letter code: Thymidylate kinase (208 aa).

10–17 (GPEGSGKT) contacts ATP.

The protein belongs to the thymidylate kinase family.

It catalyses the reaction dTMP + ATP = dTDP + ADP. Phosphorylation of dTMP to form dTDP in both de novo and salvage pathways of dTTP synthesis. This is Thymidylate kinase from Bacillus anthracis.